We begin with the raw amino-acid sequence, 422 residues long: Phospho-N-acetylmuramoyl-pentapeptide-transferase (422 aa).

A run of 9 helical transmembrane segments spans residues Leu-28–Leu-48, Val-71–Leu-91, Leu-95–Phe-115, Ile-136–Val-156, Ala-208–Ser-228, Gly-239–Ser-259, Leu-279–Phe-299, Ile-313–Leu-333, and Lys-399–Leu-419.

The protein belongs to the glycosyltransferase 4 family. MraY subfamily. It depends on Mg(2+) as a cofactor.

It localises to the cell inner membrane. The catalysed reaction is UDP-N-acetyl-alpha-D-muramoyl-L-alanyl-gamma-D-glutamyl-meso-2,6-diaminopimeloyl-D-alanyl-D-alanine + di-trans,octa-cis-undecaprenyl phosphate = di-trans,octa-cis-undecaprenyl diphospho-N-acetyl-alpha-D-muramoyl-L-alanyl-D-glutamyl-meso-2,6-diaminopimeloyl-D-alanyl-D-alanine + UMP. Its pathway is cell wall biogenesis; peptidoglycan biosynthesis. Catalyzes the initial step of the lipid cycle reactions in the biosynthesis of the cell wall peptidoglycan: transfers peptidoglycan precursor phospho-MurNAc-pentapeptide from UDP-MurNAc-pentapeptide onto the lipid carrier undecaprenyl phosphate, yielding undecaprenyl-pyrophosphoryl-MurNAc-pentapeptide, known as lipid I. The chain is Phospho-N-acetylmuramoyl-pentapeptide-transferase from Phocaeicola vulgatus (strain ATCC 8482 / DSM 1447 / JCM 5826 / CCUG 4940 / NBRC 14291 / NCTC 11154) (Bacteroides vulgatus).